The sequence spans 1001 residues: Sarcoplasmic/endoplasmic reticulum calcium ATPase 1 (1001 aa).

Transmembrane regions (helical) follow at residues 49–69, 90–110, 254–273, and 296–313; these read LWEL…LLAA, EPFV…WQER, DEFG…AVWL, and FKIA…GLPA. Residues Val304, Ala305, Ile307, and Glu309 each contribute to the Ca(2+) site. The active-site 4-aspartylphosphate intermediate is the Asp351. Residues Asp351 and Thr353 each coordinate Mg(2+). Thr353 lines the ATP pocket. Phosphothreonine is present on Thr441. The ATP site is built by Glu442, Arg489, Lys515, and Arg560. A Phosphothreonine modification is found at Thr569. Ser581 is subject to Phosphoserine. ATP contacts are provided by Thr625, Gly626, Asp627, Arg678, and Lys684. Asp703 contributes to the Mg(2+) binding site. Asn706 is an ATP binding site. 3 consecutive transmembrane segments (helical) span residues 758–777, 788–808, and 829–851; these read KQFI…CIFL, IPVQ…TALG, and ISGW…TVGA. Ca(2+)-binding residues include Asn768, Glu771, Asn796, Thr799, and Asp800. The interaction with PLN stretch occupies residues 788–808; sequence IPVQLLWVNLVTDGLPATALG. Cys876 and Cys888 are joined by a disulfide. Transmembrane regions (helical) follow at residues 898 to 917, 931 to 949, and 965 to 985; these read TMAL…NSLS, IWLL…LILY, and TQWL…EILK. Ca(2+) is bound at residue Glu908. The segment at 932 to 943 is interaction with PLN; sequence WLLGSICLSMSL.

This sequence belongs to the cation transport ATPase (P-type) (TC 3.A.3) family. Type IIA subfamily. As to quaternary structure, interacts with sarcolipin (SLN). Interacts with phospholamban (PLN). Interacts with myoregulin (MRLN). Interacts with DWORF. Interacts with VMP1. Mg(2+) is required as a cofactor. In terms of tissue distribution, skeletal muscle, fast twitch muscle (type II) fibers.

It is found in the endoplasmic reticulum membrane. Its subcellular location is the sarcoplasmic reticulum membrane. The enzyme catalyses Ca(2+)(in) + ATP + H2O = Ca(2+)(out) + ADP + phosphate + H(+). Inhibited by sarcolipin (SLN) and myoregulin (MRLN). Has also been shown to be reversibly inhibited by phospholamban (PLN) at low calcium concentrations in vitro. Dephosphorylated PLN decreases the apparent affinity of the ATPase for calcium and this inhibition is regulated by the phosphorylation of PLN in vitro. Enhanced by DWORF; DWORF increases activity by displacing sarcolipin (SLN), phospholamban (PLN) and myoregulin (MRLN). Key regulator of striated muscle performance by acting as the major Ca(2+) ATPase responsible for the reuptake of cytosolic Ca(2+) into the sarcoplasmic reticulum. Catalyzes the hydrolysis of ATP coupled with the translocation of calcium from the cytosol to the sarcoplasmic reticulum lumen. Contributes to calcium sequestration involved in muscular excitation/contraction. In Homo sapiens (Human), this protein is Sarcoplasmic/endoplasmic reticulum calcium ATPase 1.